The sequence spans 195 residues: uncharacterized protein (195 aa).

Residues 1–16 (MIRTIIVFMLLTISFG) form the signal peptide.

This is an uncharacterized protein from Acanthamoeba polyphaga mimivirus (APMV).